Reading from the N-terminus, the 111-residue chain is Heavy metal-associated isoprenylated plant protein 10 (111 aa).

Positions 1-68 constitute an HMA domain; it reads MQETVVFEWG…ICDYVDITAV (68 aa). Residues 68-111 are disordered; it reads VGPEGQPAQNRNPVKKPEPKVIRGRPYPPQKKTPGKNSDECIIL. Cysteine 108 bears the Cysteine methyl ester mark. A lipid anchor (S-farnesyl cysteine) is attached at cysteine 108. Residues 109–111 constitute a propeptide, removed in mature form; the sequence is IIL.

It belongs to the HIPP family.

Functionally, probable heavy-metal-binding protein. The polypeptide is Heavy metal-associated isoprenylated plant protein 10 (Arabidopsis thaliana (Mouse-ear cress)).